We begin with the raw amino-acid sequence, 212 residues long: Thymidylate kinase (212 aa).

Alanine 2 bears the N-acetylalanine mark. ATP-binding positions include 16–21 (RAGKST) and arginine 97. The interval 133–157 (LQLQLADAAKRGAFGHERYENGAFQ) is LID. Lysine 169 is modified (N6-acetyllysine). Positions 182 and 192 each coordinate ATP.

The protein belongs to the thymidylate kinase family. In terms of assembly, homodimer. Requires Mg(2+) as cofactor.

It catalyses the reaction dTMP + ATP = dTDP + ADP. It participates in pyrimidine metabolism; dTTP biosynthesis. Its function is as follows. Catalyzes the phosphorylation of thymidine monophosphate (dTMP) to thymidine diphosphate (dTDP), the immediate precursor for the DNA building block dTTP, with ATP as the preferred phosphoryl donor in the presence of Mg(2+). The protein is Thymidylate kinase (DTYMK) of Homo sapiens (Human).